The following is a 545-amino-acid chain: Hyaluronidase PH-20 (545 aa).

A signal peptide spans M1 to T35. Intrachain disulfides connect C60–C355 and C224–C239. An N-linked (GlcNAc...) asparagine glycan is attached at N82. The active-site Proton donor is E148. N180 carries an N-linked (GlcNAc...) asparagine glycan. N-linked (GlcNAc...) asparagine glycosylation is present at N372. 3 disulfide bridges follow: C380/C391, C385/C439, and C441/C468.

It belongs to the glycosyl hydrolase 56 family. In terms of tissue distribution, testis.

The protein resides in the cell membrane. The enzyme catalyses Random hydrolysis of (1-&gt;4)-linkages between N-acetyl-beta-D-glucosamine and D-glucuronate residues in hyaluronate.. Functionally, involved in sperm-egg adhesion. Upon fertilization sperm must first penetrate a layer of cumulus cells that surrounds the egg before reaching the zona pellucida. The cumulus cells are embedded in a matrix containing hyaluronic acid which is formed prior to ovulation. This protein aids in penetrating the layer of cumulus cells by digesting hyaluronic acid. The chain is Hyaluronidase PH-20 (SPAM1) from Oryctolagus cuniculus (Rabbit).